Consider the following 294-residue polypeptide: Nucleotide-binding protein CLB_3433 (294 aa).

An ATP-binding site is contributed by 8 to 15 (GLSGAGKT). 59–62 (DIRG) contributes to the GTP binding site.

The protein belongs to the RapZ-like family.

Its function is as follows. Displays ATPase and GTPase activities. The chain is Nucleotide-binding protein CLB_3433 from Clostridium botulinum (strain ATCC 19397 / Type A).